The following is a 94-amino-acid chain: Co-chaperonin GroES (94 aa).

It belongs to the GroES chaperonin family. As to quaternary structure, heptamer of 7 subunits arranged in a ring. Interacts with the chaperonin GroEL.

Its subcellular location is the cytoplasm. Functionally, together with the chaperonin GroEL, plays an essential role in assisting protein folding. The GroEL-GroES system forms a nano-cage that allows encapsulation of the non-native substrate proteins and provides a physical environment optimized to promote and accelerate protein folding. GroES binds to the apical surface of the GroEL ring, thereby capping the opening of the GroEL channel. The protein is Co-chaperonin GroES of Bacillus licheniformis (strain ATCC 14580 / DSM 13 / JCM 2505 / CCUG 7422 / NBRC 12200 / NCIMB 9375 / NCTC 10341 / NRRL NRS-1264 / Gibson 46).